Here is a 566-residue protein sequence, read N- to C-terminus: Tetratricopeptide repeat protein 34 (566 aa).

The disordered stretch occupies residues 1-29 (MLQRSPRAGPSRAQGRREAAETGGPTTQE). 8 TPR repeats span residues 50 to 83 (EASRLLAADALYRLGRLEETHKALLVALSRRPQA), 178 to 211 (SESLLARARCYGFLGQKKTAMFDFNTVLRAEPGN), 212 to 245 (VQALCGRALVHLALDQLQEAVDDIVSALKLGPGT), 306 to 339 (PHWHLLLADILMAQGSYEEAGTHLEKALHRAPTS), 341 to 373 (AARARLGLLQLKKGDVPGAARDLQSLAEVDAPD), 424 to 457 (ACHLRLRATCLAELQEFGRALRDLDHVLQEALGD), 464 to 497 (AEDFCRQGRLLLSLGDEAAAAGAFAQALKLAPSL), and 512 to 545 (ARMFLLRGQCCLEEQRHAEAWTAVESGLLVDPDH).

This chain is Tetratricopeptide repeat protein 34 (TTC34), found in Homo sapiens (Human).